Reading from the N-terminus, the 612-residue chain is uncharacterized protein (612 aa).

Disordered stretches follow at residues 46–113 (QQPQ…MVTP), 129–185 (QQYQ…TPTY), 313–360 (TKDG…GSTM), 457–488 (FSIS…SGYG), and 593–612 (NNTN…VVTI). The span at 58–102 (HQQIPISTQSTPNSTSSTTTTTTTTTSTTTAPTSNSKKSKTTPSN) shows a compositional bias: low complexity. Composition is skewed to polar residues over residues 103 to 113 (GNKPTSGMVTP) and 129 to 138 (QQYQPNSQLQ). The segment covering 143–169 (IIKKSSLSTTPNNINNNNNNNNNTNTI) has biased composition (low complexity). Over residues 175–185 (GGNNSAPTPTY) the composition is skewed to polar residues. Low complexity predominate over residues 323–359 (TTSSTSTSSSATSTTSSSTSSTTTTSSTSNSSTPGST).

This is an uncharacterized protein from Dictyostelium discoideum (Social amoeba).